A 238-amino-acid polypeptide reads, in one-letter code: ATP synthase subunit a, chloroplastic (238 aa).

Transmembrane regions (helical) follow at residues 27-47 (GQVL…SFLG), 86-106 (VPFL…GALL), 125-145 (INTT…AGIS), 190-210 (LVVG…IMLL), and 211-231 (GVFT…AYIN).

It belongs to the ATPase A chain family. As to quaternary structure, F-type ATPases have 2 components, F(1) - the catalytic core - and F(0) - the membrane proton channel. F(1) has five subunits: alpha(3), beta(3), gamma(1), delta(1), epsilon(1). F(0) has four main subunits: a(1), b(1), b'(1) and c(10-14). The alpha and beta chains form an alternating ring which encloses part of the gamma chain. F(1) is attached to F(0) by a central stalk formed by the gamma and epsilon chains, while a peripheral stalk is formed by the delta, b and b' chains.

It is found in the plastid. The protein resides in the chloroplast thylakoid membrane. Functionally, f(1)F(0) ATP synthase produces ATP from ADP in the presence of a proton or sodium gradient. F-type ATPases consist of two structural domains, F(1) containing the extramembraneous catalytic core and F(0) containing the membrane proton channel, linked together by a central stalk and a peripheral stalk. During catalysis, ATP synthesis in the catalytic domain of F(1) is coupled via a rotary mechanism of the central stalk subunits to proton translocation. The protein is ATP synthase subunit a, chloroplastic of Chlamydomonas reinhardtii (Chlamydomonas smithii).